Reading from the N-terminus, the 177-residue chain is Ubiquinol-cytochrome c reductase iron-sulfur subunit (177 aa).

A helical transmembrane segment spans residues 18-38 (IVLTASSVAAVGAACAFWPII). The 88-residue stretch at 88 to 175 (ARAVKMSELI…YIFISDTKIR (88 aa)) folds into the Rieske domain. 4 residues coordinate [2Fe-2S] cluster: Cys-120, His-122, Cys-139, and His-142. Residues Cys-125 and Cys-141 are joined by a disulfide bond.

It belongs to the Rieske iron-sulfur protein family. As to quaternary structure, the main subunits of complex b-c1 are: cytochrome b, cytochrome c1 and the Rieske protein. Requires [2Fe-2S] cluster as cofactor.

It localises to the cell membrane. It catalyses the reaction a quinol + 2 Fe(III)-[cytochrome c](out) = a quinone + 2 Fe(II)-[cytochrome c](out) + 2 H(+)(out). In terms of biological role, component of the ubiquinol-cytochrome c reductase complex (complex III or cytochrome b-c1 complex), which is a respiratory chain that generates an electrochemical potential coupled to ATP synthesis. This chain is Ubiquinol-cytochrome c reductase iron-sulfur subunit (petA), found in Rickettsia typhi (strain ATCC VR-144 / Wilmington).